The sequence spans 203 residues: Holliday junction branch migration complex subunit RuvA (203 aa).

Residues 1–63 are domain I; it reads MIDYLRGTLT…EDVIRLYGFR (63 aa). The tract at residues 64–142 is domain II; sequence TKEKRSLFEK…ELHPGLFSQK (79 aa). Residues 143-152 form a flexible linker region; the sequence is EEQPKPHEKN. Positions 153-203 are domain III; sequence DGNQALDEAMEALKALGYVEKELKKVKPKLEQETLTTDAYIKKALQLMLNR.

It belongs to the RuvA family. Homotetramer. Forms an RuvA(8)-RuvB(12)-Holliday junction (HJ) complex. HJ DNA is sandwiched between 2 RuvA tetramers; dsDNA enters through RuvA and exits via RuvB. An RuvB hexamer assembles on each DNA strand where it exits the tetramer. Each RuvB hexamer is contacted by two RuvA subunits (via domain III) on 2 adjacent RuvB subunits; this complex drives branch migration. In the full resolvosome a probable DNA-RuvA(4)-RuvB(12)-RuvC(2) complex forms which resolves the HJ.

The protein localises to the cytoplasm. Its function is as follows. The RuvA-RuvB-RuvC complex processes Holliday junction (HJ) DNA during genetic recombination and DNA repair, while the RuvA-RuvB complex plays an important role in the rescue of blocked DNA replication forks via replication fork reversal (RFR). RuvA specifically binds to HJ cruciform DNA, conferring on it an open structure. The RuvB hexamer acts as an ATP-dependent pump, pulling dsDNA into and through the RuvAB complex. HJ branch migration allows RuvC to scan DNA until it finds its consensus sequence, where it cleaves and resolves the cruciform DNA. This is Holliday junction branch migration complex subunit RuvA from Halalkalibacterium halodurans (strain ATCC BAA-125 / DSM 18197 / FERM 7344 / JCM 9153 / C-125) (Bacillus halodurans).